The chain runs to 36 residues: Pancreatic polypeptide (36 aa).

Tyr36 is modified (tyrosine amide).

Belongs to the NPY family.

It is found in the secreted. In terms of biological role, hormone secreted by pancreatic cells that acts as a regulator of pancreatic and gastrointestinal functions probably by signaling through the G protein-coupled receptor NPY4R2. The sequence is that of Pancreatic polypeptide (PPY) from Didelphis virginiana (North American opossum).